The sequence spans 482 residues: MDELVHDLASALEQTSEQNKLGELWEEMALSPRQQRRQLRKRRGRKRRSDFTHLAEHTCCYSEASESSLDEATKDCREVAPVTNFSDSDDTMVAKRHPALNAIVKSKQHSWHESDSFTENAPCRPLRRRRKVKRVTSEVAASLQQKLKVSDWSYERGCRFKSAKKQRLSRWKENTPWTSSGHGLCESAENRTFLSKTGRKERMECETDEQKQGSDENMSECETSSVCSSSDTGLFTNDEGRQGDDEQSDWFYEGECVPGFTVPNLLPKWAPDHCSEVERMDSGLDKFSDSTFLLPSRPAQRGYHTRLNRLPGAAARCLRKGRRRLVGKETSINTLGTERISHIISDPRQKEKNKALASDFPHISACAHEFNPLSPLYSLDVLADASHRRCSPAHCSARQANVHWGPPCSRDIKRKRKPVATASLSSPSAVHMDAVEPTTPASQAPKSPSSEWLVRTSAAEKATDATTATFFKMPQEKSPGYS.

A phosphoserine mark is found at serine 31, serine 86, and serine 88. Threonine 91 bears the Phosphothreonine mark. A Glycyl lysine isopeptide (Lys-Gly) (interchain with G-Cter in SUMO2) cross-link involves residue lysine 196. A compositionally biased stretch (basic and acidic residues) spans 198-214 (GRKERMECETDEQKQGS). 2 disordered regions span residues 198-247 (GRKE…DDEQ) and 413-482 (KRKR…PGYS). A compositionally biased stretch (low complexity) spans 220-230 (ECETSSVCSSS). Over residues 439-450 (TPASQAPKSPSS) the composition is skewed to polar residues. Phosphoserine is present on residues serine 447 and serine 449. A compositionally biased stretch (low complexity) spans 456 to 469 (TSAAEKATDATTAT).

This Homo sapiens (Human) protein is G patch domain-containing protein 2-like (GPATCH2L).